Here is a 257-residue protein sequence, read N- to C-terminus: NAD-capped RNA hydrolase NudC (257 aa).

Arg69 contributes to the substrate binding site. Residues Cys98 and Cys101 each coordinate Zn(2+). Position 111 (Glu111) interacts with substrate. Zn(2+)-binding residues include Cys116 and Cys119. Tyr124 is a substrate binding site. A Nudix hydrolase domain is found at 125–248; the sequence is PQIAPCIIVA…TVARRLIEDT (124 aa). 3 residues coordinate a divalent metal cation: Ala158, Glu174, and Glu178. The Nudix box motif lies at 159–180; the sequence is GFVEVGETLEQAVAREVMEESG. 192-199 contacts substrate; sequence QPWPFPQS. Glu219 lines the a divalent metal cation pocket. Ala241 provides a ligand contact to substrate.

The protein belongs to the Nudix hydrolase family. NudC subfamily. As to quaternary structure, homodimer. Mg(2+) serves as cofactor. The cofactor is Mn(2+). It depends on Zn(2+) as a cofactor.

It catalyses the reaction a 5'-end NAD(+)-phospho-ribonucleoside in mRNA + H2O = a 5'-end phospho-adenosine-phospho-ribonucleoside in mRNA + beta-nicotinamide D-ribonucleotide + 2 H(+). The catalysed reaction is NAD(+) + H2O = beta-nicotinamide D-ribonucleotide + AMP + 2 H(+). The enzyme catalyses NADH + H2O = reduced beta-nicotinamide D-ribonucleotide + AMP + 2 H(+). Functionally, mRNA decapping enzyme that specifically removes the nicotinamide adenine dinucleotide (NAD) cap from a subset of mRNAs by hydrolyzing the diphosphate linkage to produce nicotinamide mononucleotide (NMN) and 5' monophosphate mRNA. The NAD-cap is present at the 5'-end of some mRNAs and stabilizes RNA against 5'-processing. Has preference for mRNAs with a 5'-end purine. Catalyzes the hydrolysis of a broad range of dinucleotide pyrophosphates. The protein is NAD-capped RNA hydrolase NudC of Klebsiella pneumoniae subsp. pneumoniae (strain ATCC 700721 / MGH 78578).